Here is a 480-residue protein sequence, read N- to C-terminus: Sestrin-2 (480 aa).

Position 1 is an N-acetylmethionine (Met1). Residues 20-43 (RGGVAGPETREEHREGQARRGSRG) form a disordered region. Residues 27–37 (ETREEHREGQA) show a composition bias toward basic and acidic residues. An N-terminal domain; mediates the alkylhydroperoxide reductase activity region spans residues 66–239 (GLEALMSSGR…APSPPSEQGT (174 aa)). Cys125 acts as the Cysteine sulfenic acid (-SOH) intermediate in catalysis. A Glycyl lysine isopeptide (Lys-Gly) (interchain with G-Cter in ubiquitin) cross-link involves residue Lys175. Disordered stretches follow at residues 221-251 (DAEG…NSGG) and 272-291 (LLRD…ELEK). Positions 223 to 238 (EGSPASQAPSPPSEQG) are enriched in low complexity. Residue Ser249 is modified to Phosphoserine. Residues 308-480 (PHPDILCFVE…ALRAITRYMT (173 aa)) are C-terminal domain; mediates TORC1 regulation. L-leucine is bound by residues 374–377 (TYNT), Thr386, and Glu451.

It belongs to the sestrin family. Interacts with the GATOR2 complex which is composed of MIOS, SEC13, SEH1L, WDR24 and WDR59; the interaction is negatively regulated by leucine. Conveys leucine availability via direct interaction with SEH1L and WDR24 components of the GATOR2 complex. Interacts with RRAGA, RRAGB, RRAGC and RRAGD; may function as a guanine nucleotide dissociation inhibitor for RRAGs and regulate them. May interact with the TORC2 complex. Interacts with KEAP1, RBX1, SQSTM and ULK1; to regulate the degradation of KEAP1. May also associate with the complex composed of TSC1, TSC2 and the AMP-responsive protein kinase/AMPK to regulate TORC1 signaling. May interact with PRDX1. Phosphorylated by ULK1 at multiple sites. Post-translationally, ubiquitinated at Lys-175 by RNF167 via 'Lys-63'-linked polyubiquitination in response to leucine deprivation: ubiquitination promotes SESN2-interaction with the GATOR2 complex, leading to inhibit the TORC1 signaling pathway. Deubiquitinated at Lys-175 by STAMBPL1, promoting the TORC1 signaling pathway. Ubiquitinated by RNF186; ubiquitination mediates proteasomal degradation. As to expression, detected in heart, liver and skeletal muscles (at protein level).

The protein localises to the cytoplasm. It carries out the reaction a hydroperoxide + L-cysteinyl-[protein] = S-hydroxy-L-cysteinyl-[protein] + an alcohol. In terms of biological role, functions as an intracellular leucine sensor that negatively regulates the mTORC1 signaling pathway through the GATOR complex. In absence of leucine, binds the GATOR subcomplex GATOR2 and prevents mTORC1 signaling. Binding of leucine to SESN2 disrupts its interaction with GATOR2 thereby activating the TORC1 signaling pathway. This stress-inducible metabolic regulator also plays a role in protection against oxidative and genotoxic stresses. May negatively regulate protein translation in response to endoplasmic reticulum stress, via mTORC1. May positively regulate the transcription by NFE2L2 of genes involved in the response to oxidative stress by facilitating the SQSTM1-mediated autophagic degradation of KEAP1. May also mediate TP53 inhibition of TORC1 signaling upon genotoxic stress. Moreover, may prevent the accumulation of reactive oxygen species (ROS) through the alkylhydroperoxide reductase activity born by the N-terminal domain of the protein. Was originally reported to contribute to oxidative stress resistance by reducing PRDX1. However, this could not be confirmed. The sequence is that of Sestrin-2 from Mus musculus (Mouse).